We begin with the raw amino-acid sequence, 265 residues long: tRNA pseudouridine synthase A (265 aa).

The active-site Nucleophile is Asp-58. Tyr-116 contributes to the substrate binding site.

The protein belongs to the tRNA pseudouridine synthase TruA family. As to quaternary structure, homodimer.

The catalysed reaction is uridine(38/39/40) in tRNA = pseudouridine(38/39/40) in tRNA. Formation of pseudouridine at positions 38, 39 and 40 in the anticodon stem and loop of transfer RNAs. The polypeptide is tRNA pseudouridine synthase A (Neisseria gonorrhoeae (strain ATCC 700825 / FA 1090)).